The chain runs to 224 residues: LexA repressor (224 aa).

Residues 31 to 51 (RAEIAAELGFKSANAAEEHLQ) constitute a DNA-binding region (H-T-H motif). Active-site for autocatalytic cleavage activity residues include serine 142 and lysine 179.

This sequence belongs to the peptidase S24 family. Homodimer.

It carries out the reaction Hydrolysis of Ala-|-Gly bond in repressor LexA.. Its function is as follows. Represses a number of genes involved in the response to DNA damage (SOS response), including recA and lexA. In the presence of single-stranded DNA, RecA interacts with LexA causing an autocatalytic cleavage which disrupts the DNA-binding part of LexA, leading to derepression of the SOS regulon and eventually DNA repair. In Verminephrobacter eiseniae (strain EF01-2), this protein is LexA repressor.